The primary structure comprises 111 residues: Toxin 3FTx-Tri2 (111 aa).

The N-terminal stretch at 1-19 (MKTLLLALVVLAFVCLGSA) is a signal peptide. Residues 20 to 34 (DQVGLGKEQIDRGRR) constitute a propeptide that is removed on maturation. Gln35 is modified (pyrrolidone carboxylic acid). Disulfide bonds link Cys44/Cys68, Cys47/Cys55, Cys61/Cys87, Cys91/Cys102, and Cys103/Cys108.

It belongs to the three-finger toxin family. Ancestral subfamily. Boigatoxin sub-subfamily. In terms of tissue distribution, expressed by the venom gland.

The protein localises to the secreted. Functionally, potent postsynaptic neurotoxin. Displays readily reversible competitive antagonism at the nicotinic acetylcholine receptor (nAChR). The chain is Toxin 3FTx-Tri2 from Trimorphodon biscutatus (Western lyre snake).